The chain runs to 580 residues: Small conductance calcium-activated potassium channel protein 2 (580 aa).

2 disordered regions span residues 1–68 and 88–116; these read MSSC…VSKP and GGGG…KKNQ. Positions 48 to 61 are enriched in low complexity; it reads SSPSAAAAASSSAP. The segment covering 88–104 has biased composition (gly residues); the sequence is GGGGGGGGGGGGSGHGS. A helical membrane pass occupies residues 140–160; that stretch reads LIFGMFGIVVMVIETELSWGA. A Phosphotyrosine modification is found at tyrosine 161. The helical transmembrane segment at 169–189 threads the bilayer; sequence LALKCLISLSTIILLGLIIVY. The helical transmembrane segment at 215–235 threads the bilayer; that stretch reads IFFICLEILVCAIHPIPGNYT. The chain crosses the membrane as a helical span at residues 257–277; it reads IILSIPMFLRLYLIARVMLLH. The chain crosses the membrane as a helical span at residues 306–326; sequence LMTICPGTVLLVFSISLWIIA. The pore-forming intramembrane region spans 346–366; sequence FLGAMWLISITFLSIGYGDMV. Residues 375–395 form a helical membrane-spanning segment; it reads VCLLTGIMGAGCTALVVAVVA. Residues 413 to 489 form a calmodulin-binding region; sequence DTQLTKRVKN…LVDLAKTQNI (77 aa). The segment covering 551–560 has biased composition (basic and acidic residues); that stretch reads HVTYNAERSR. Positions 551-580 are disordered; it reads HVTYNAERSRSSSRRRRSSSTAPPTSSESS. The segment covering 569 to 580 has biased composition (low complexity); the sequence is SSTAPPTSSESS.

It belongs to the potassium channel KCNN family. KCa2.2/KCNN2 subfamily. Homodimer. Heteromultimer with KCNN1 and KCNN3. The complex is composed of 4 channel subunits each of which binds to a calmodulin subunit which regulates the channel activity through calcium-binding. Interacts (via N-terminal domain) with MPP2. In terms of tissue distribution, brain.

The protein resides in the membrane. The protein localises to the cytoplasm. Its subcellular location is the myofibril. It localises to the sarcomere. It is found in the z line. The catalysed reaction is K(+)(in) = K(+)(out). Its activity is regulated as follows. Inhibited by bee venom neurotoxin apamin. Inhibited by UCL 1684 and tetraethylammonium (TEA). Small conductance calcium-activated potassium channel that mediates the voltage-independent transmembrane transfer of potassium across the cell membrane through a constitutive interaction with calmodulin which binds the intracellular calcium allowing its opening. The current is characterized by a voltage-independent activation, an intracellular calcium concentration increase-dependent activation and a single-channel conductance of about 3 picosiemens. Also presents an inwardly rectifying current, thus reducing its already small outward conductance of potassium ions, which is particularly the case when the membrane potential displays positive values, above + 20 mV. The inward rectification could be due to a blockade of the outward current by intracellular divalent cations such as calcium and magnesium and could also be due to an intrinsic property of the channel pore, independent of intracellular divalent ions. There are three positively charged amino acids in the S6 transmembrane domain, close to the pore, that collectively control the conductance and rectification through an electrostatic mechanism. Additionally, electrostatic contributions from these residues also play an important role in determining the intrinsic open probability of the channel in the absence of calcium, affecting the apparent calcium affinity for activation. Forms an heteromeric complex with calmodulin, which is constitutively associated in a calcium-independent manner. Channel opening is triggered when calcium binds the calmodulin resulting in a rotary movement leading to the formation of the dimeric complex to open the gate. Plays a role in the repolarization phase of cardiac action potential. The sequence is that of Small conductance calcium-activated potassium channel protein 2 from Rattus norvegicus (Rat).